Reading from the N-terminus, the 141-residue chain is Flagellar assembly factor FliW 1 (141 aa).

It belongs to the FliW family. Interacts with translational regulator CsrA and flagellin(s).

It localises to the cytoplasm. In terms of biological role, acts as an anti-CsrA protein, binds CsrA and prevents it from repressing translation of its target genes, one of which is flagellin. Binds to flagellin and participates in the assembly of the flagellum. The sequence is that of Flagellar assembly factor FliW 1 from Desulfotalea psychrophila (strain LSv54 / DSM 12343).